Reading from the N-terminus, the 334-residue chain is D-fructose 1,6-bisphosphatase class 2/sedoheptulose 1,7-bisphosphatase (334 aa).

Positions 33, 57, 85, and 88 each coordinate Mn(2+). Residues 88–90, Tyr119, 164–166, and 186–188 each bind substrate; these read EGT, RAR, and DGD. Glu213 serves as a coordination point for Mn(2+).

The protein belongs to the FBPase class 2 family. As to quaternary structure, homotetramer. Requires Mn(2+) as cofactor.

It catalyses the reaction beta-D-fructose 1,6-bisphosphate + H2O = beta-D-fructose 6-phosphate + phosphate. It carries out the reaction D-sedoheptulose 1,7-bisphosphate + H2O = D-sedoheptulose 7-phosphate + phosphate. It functions in the pathway carbohydrate biosynthesis; Calvin cycle. Functionally, catalyzes the hydrolysis of fructose 1,6-bisphosphate (Fru 1,6-P2) and sedoheptulose 1,7-bisphosphate (Sed 1,7-P2) to fructose 6-phosphate and sedoheptulose 7-phosphate, respectively. The polypeptide is D-fructose 1,6-bisphosphatase class 2/sedoheptulose 1,7-bisphosphatase (Synechococcus sp. (strain RCC307)).